A 265-amino-acid polypeptide reads, in one-letter code: MIESQRHSYHLVDPSPWPISGSLGALATTVGGVMYMHSFQGGATLLSLGLIFILYTMFVWWRDVLRESTLEGHHTKVVQLGPRYGSIPFIVSEVMFLFAFFWASSHSSLAPTVEIGGIWPPLGIWVLDPWEIPFLNTPILLSSGAAVTWAHHAILAGKEKRAVYALVATVSLALVFTGFQGMEYYQAPFTISDSIYGSTFFLATGFHGFHVIIGTLFLIICGIRQYLGHLTKEHHVGFEAAAWYWHFVDVVWLFLFVSIYWWGGI.

8 helical membrane-spanning segments follow: residues 16–36 (PWPISGSLGALATTVGGVMYM), 41–61 (GGATLLSLGLIFILYTMFVWW), 84–104 (YGSIPFIVSEVMFLFAFFWAS), 115–135 (IGGIWPPLGIWVLDPWEIPFL), 137–157 (TPILLSSGAAVTWAHHAILAG), 162–182 (AVYALVATVSLALVFTGFQGM), 200–220 (FFLATGFHGFHVIIGTLFLII), and 245–265 (WHFVDVVWLFLFVSIYWWGGI).

Belongs to the cytochrome c oxidase subunit 3 family. As to quaternary structure, component of the cytochrome c oxidase (complex IV, CIV), a multisubunit enzyme composed of a catalytic core of 3 subunits and several supernumerary subunits. The complex exists as a monomer or a dimer and forms supercomplexes (SCs) in the inner mitochondrial membrane with ubiquinol-cytochrome c oxidoreductase (cytochrome b-c1 complex, complex III, CIII).

It localises to the mitochondrion inner membrane. The enzyme catalyses 4 Fe(II)-[cytochrome c] + O2 + 8 H(+)(in) = 4 Fe(III)-[cytochrome c] + 2 H2O + 4 H(+)(out). In terms of biological role, component of the cytochrome c oxidase, the last enzyme in the mitochondrial electron transport chain which drives oxidative phosphorylation. The respiratory chain contains 3 multisubunit complexes succinate dehydrogenase (complex II, CII), ubiquinol-cytochrome c oxidoreductase (cytochrome b-c1 complex, complex III, CIII) and cytochrome c oxidase (complex IV, CIV), that cooperate to transfer electrons derived from NADH and succinate to molecular oxygen, creating an electrochemical gradient over the inner membrane that drives transmembrane transport and the ATP synthase. Cytochrome c oxidase is the component of the respiratory chain that catalyzes the reduction of oxygen to water. Electrons originating from reduced cytochrome c in the intermembrane space (IMS) are transferred via the dinuclear copper A center (CU(A)) of subunit 2 and heme A of subunit 1 to the active site in subunit 1, a binuclear center (BNC) formed by heme A3 and copper B (CU(B)). The BNC reduces molecular oxygen to 2 water molecules using 4 electrons from cytochrome c in the IMS and 4 protons from the mitochondrial matrix. The polypeptide is Cytochrome c oxidase subunit 3 (COX3) (Glycine max (Soybean)).